Consider the following 695-residue polypeptide: Elongation factor G 2 (695 aa).

In terms of domain architecture, tr-type G spans 5–280; it reads SKYRNIGIFA…AVVDYLPSPT (276 aa). GTP contacts are provided by residues 14 to 21, 78 to 82, and 132 to 135; these read AHVDAGKT, DTPGH, and NKLD.

This sequence belongs to the TRAFAC class translation factor GTPase superfamily. Classic translation factor GTPase family. EF-G/EF-2 subfamily.

It localises to the cytoplasm. In terms of biological role, catalyzes the GTP-dependent ribosomal translocation step during translation elongation. During this step, the ribosome changes from the pre-translocational (PRE) to the post-translocational (POST) state as the newly formed A-site-bound peptidyl-tRNA and P-site-bound deacylated tRNA move to the P and E sites, respectively. Catalyzes the coordinated movement of the two tRNA molecules, the mRNA and conformational changes in the ribosome. The polypeptide is Elongation factor G 2 (Photobacterium profundum (strain SS9)).